A 371-amino-acid polypeptide reads, in one-letter code: 4-hydroxy-3-methylbut-2-en-1-yl diphosphate synthase (flavodoxin) (371 aa).

Positions 271, 274, 306, and 313 each coordinate [4Fe-4S] cluster.

The protein belongs to the IspG family. It depends on [4Fe-4S] cluster as a cofactor.

The enzyme catalyses (2E)-4-hydroxy-3-methylbut-2-enyl diphosphate + oxidized [flavodoxin] + H2O + 2 H(+) = 2-C-methyl-D-erythritol 2,4-cyclic diphosphate + reduced [flavodoxin]. Its pathway is isoprenoid biosynthesis; isopentenyl diphosphate biosynthesis via DXP pathway; isopentenyl diphosphate from 1-deoxy-D-xylulose 5-phosphate: step 5/6. Converts 2C-methyl-D-erythritol 2,4-cyclodiphosphate (ME-2,4cPP) into 1-hydroxy-2-methyl-2-(E)-butenyl 4-diphosphate. The protein is 4-hydroxy-3-methylbut-2-en-1-yl diphosphate synthase (flavodoxin) of Actinobacillus succinogenes (strain ATCC 55618 / DSM 22257 / CCUG 43843 / 130Z).